The following is a 1341-amino-acid chain: Subtilisin-like protease 2 (1341 aa).

A signal peptide spans 1–18 (MLNIIYVVSLILIKFIFY). Positions 19 to 686 (KECNNNNNYY…KLYNNKYSFL (668 aa)) are cleaved as a propeptide — inhibition peptide. 2 disordered regions span residues 85 to 107 (EKKTKGEENEIEKKKENDLEKKK) and 143 to 171 (ADVSNNDNSGHEENNKHKLNKKNSSNYKN). N-linked (GlcNAc...) asparagine glycosylation is found at asparagine 165, asparagine 343, asparagine 449, asparagine 453, and asparagine 492. Positions 415–474 (KKSKKEKENTQQKGGNNPNVDINILNNNNNNNNNNNSNNNSNSMNDEEINYNNNNNNKES) are disordered. Residues 430–474 (NNPNVDINILNNNNNNNNNNNSNNNSNSMNDEEINYNNNNNNKES) show a composition bias toward low complexity. The segment at 499–530 (IYHNKNDNSYKNKKEGTGKNNDNNDPNNNNNK) is disordered. Positions 502-515 (NKNDNSYKNKKEGT) are enriched in basic and acidic residues. Over residues 517–530 (KNNDNNDPNNNNNK) the composition is skewed to low complexity. 3 N-linked (GlcNAc...) asparagine glycosylation sites follow: asparagine 550, asparagine 641, and asparagine 728. Topologically, residues 687–1136 (NKFLNIEPLI…LYNLYEYDSH (450 aa)) are extracellular. Residues 726–1019 (TWNLSIIRVF…DSLVNAEGAV (294 aa)) enclose the Peptidase S8 domain. Residues aspartate 754 and histidine 797 each act as charge relay system in the active site. N-linked (GlcNAc...) asparagine glycans are attached at residues asparagine 820, asparagine 856, asparagine 892, and asparagine 950. The Charge relay system role is filled by serine 960. Asparagine 1009 and asparagine 1105 each carry an N-linked (GlcNAc...) asparagine glycan. Residues 1137–1157 (YLLASVILFFLALLSIFVGMI) traverse the membrane as a helical segment. At 1158-1341 (YMKSRKHSDK…MNQLDDMFMK (184 aa)) the chain is on the cytoplasmic side.

It belongs to the peptidase S8 family. Proteolytically cleaved at the N-terminus to generate a 74kDa intermediate which is further processed into a 72kDa form. The first maturation cleavage is autocatalytic, occurs in the ER and is necessary for the subsequent SUB2 trafficking to the microneme. The second cleavage may be mediated by PMX/plasmepsin X.

It localises to the cell membrane. The protein localises to the cytoplasmic vesicle. Its subcellular location is the secretory vesicle. The protein resides in the microneme membrane. It carries out the reaction Hydrolysis of proteins with broad specificity for peptide bonds, and a preference for a large uncharged residue in P1. Hydrolyzes peptide amides.. With respect to regulation, activation may be calcium-dependent. Inhibited by the non-covalent interaction with the cleaved propeptide. Functionally, serine protease which plays an essential role in the shedding of AMA1, MSP1 and MSP7 from the surface of the invading merozoite; this step is essential for productive invasion and the release of the adhesion between the erythrocyte and the merozoite. May cleave TRAMP/PTTRAMP, thereby shedding TRAMP from the merozoite surface during erythrocyte invasion. The polypeptide is Subtilisin-like protease 2 (Plasmodium falciparum (isolate 3D7)).